A 431-amino-acid polypeptide reads, in one-letter code: Beta-lactamase hydrolase-like protein (431 aa).

Zn(2+) contacts are provided by histidine 212, histidine 214, and histidine 286. Aspartate 309 lines the substrate pocket.

It belongs to the metallo-beta-lactamase superfamily. The cofactor is Zn(2+).

Could play a role in cell adherence or biofilm development. The polypeptide is Beta-lactamase hydrolase-like protein (Xylella fastidiosa (strain 9a5c)).